The sequence spans 2871 residues: Fibrillin-1 (2871 aa).

The N-terminal stretch at 1–24 (MRRGGLLEVALGFTVLLASYTSHG) is a signal peptide. A propeptide spanning residues 25-44 (ADTNLEAGNVKETRANRAKR) is cleaved from the precursor. Residues 45-81 (RGGGGHDALKGPNVCGSRYNAYCCPGWKTLPGGNQCI) are fibrillin unique N-terminal (FUN) domain. The N-terminal domain stretch occupies residues 45–450 (RGGGGHDALK…PPRVLPVNVT (406 aa)). 11 disulfides stabilise this stretch: C59-C68, C67-C80, C85-C94, C89-C100, C102-C111, C119-C129, C123-C134, C136-C145, C150-C160, C154-C166, and C168-C177. 3 EGF-like domains span residues 81 to 112 (IVPICRHSCGDGFCSRPNMCTCPSGQIAPSCG), 115 to 146 (SIQHCNIRCMNGGSCSDDHCLCQKGYIGTHCG), and 147 to 178 (QPVCESGCLNGGRCVAPNRCACTYGFTGPQCE). An interaction with MFAP4 region spans residues 119–329 (CNIRCMNGGS…YTSPDGTRCI (211 aa)). Residues 184-236 (GPCFTVISNQMCQGQLSGIVCTKTLCCATVGRAWGHPCEMCPAQPHPCRRGFI) enclose the TB 1 domain. Residues 195-221 (CQGQLSGIVCTKTLCCATVGRAWGHPC) are hybrid domain 1. Residues 246–287 (DVDECQAIPGLCQGGNCINTVGSFECKCPAGHKFNEVSQKCE) enclose the EGF-like 4; calcium-binding domain. 6 disulfides stabilise this stretch: C250–C262, C257–C271, C273–C286, C292–C304, C299–C313, and C315–C328. An O-linked (Glc) serine glycan is attached at S268. One can recognise an EGF-like 5; calcium-binding domain in the interval 288–329 (DIDECSTIPGICDGGECTNTVSSYFCKCPPGFYTSPDGTRCI). The TB 2 domain occupies 334-389 (GYCYTALANGRCSNQLPQSITKMQCCCDVGRCWSPGVTVAPEMCPIRATEDFNKLC). N448 is a glycosylation site (N-linked (GlcNAc...) asparagine). One can recognise an EGF-like 6 domain in the interval 449 to 489 (VTDYCQLFRYLCQNGRCIPTPGSYRCECNKGFQLDLRGECI). Disulfide bonds link C453–C465, C460–C474, C476–C488, C494–C504, C499–C513, C515–C528, C534–C546, C541–C555, C557–C570, C576–C587, C582–C596, C598–C611, C617–C628, C623–C637, and C639–C652. S471 carries an O-linked (Glc) serine glycan. The 40-residue stretch at 490-529 (DVDECEKNPCAGGECINTQGSYTCQCRPGYQSTLTRTECR) folds into the EGF-like 7; calcium-binding domain. S510 carries an O-linked (Glc) serine glycan. The 42-residue stretch at 530–571 (DIDECLQNGRICNNGRCINTDGSFHCVCNAGFHVTRDGKNCE) folds into the EGF-like 8; calcium-binding domain. The region spanning 572 to 612 (DMDECSIRNMCLNGMCINEDGSFKCICKPGFQLASDGRYCK) is the EGF-like 9; calcium-binding domain. The 41-residue stretch at 613–653 (DINECETPGICMNGRCVNTDGSYRCECFPGLAVGLDGRVCV) folds into the EGF-like 10; calcium-binding domain. A TB 3 domain is found at 659-711 (STCYGGYKRGQCVKPLFGAVTKSECCCASTEYAFGEPCQPCPSQNSAEYQALC). Residues 723–764 (DINECALDPDICPNGICENLRGTYKCICNSGYEVDSTGKNCV) enclose the EGF-like 11; calcium-binding domain. Disulfide bonds link C727-C739, C734-C748, C750-C763, C769-C781, C776-C790, C792-C805, C811-C821, C816-C830, C832-C845, C853-C875, C862-C887, C876-C890, C896-C908, C914-C926, C921-C935, and C937-C950. The EGF-like 12; calcium-binding domain occupies 765 to 806 (DINECVLNSLLCDNGQCRNTPGSFVCTCPKGFIYKPELKTCE). An EGF-like 13; calcium-binding domain is found at 807 to 846 (DIDECESSPCINGVCKNSPGSFICECSSESTLDPTKTICI). The TB 4 domain maps to 851–902 (GTCWQTVIDGRCEININGATLKSQCCSSLGAAWGSPCTPCQVDPICGKGYSR). A hybrid domain 2 region spans residues 862–887 (CEININGATLKSQCCSSLGAAWGSPC). One can recognise an EGF-like 14; calcium-binding domain in the interval 910-951 (DIDECEVFPGVCKNGLCVNSKGSFKCQCPSGMTLDATGRICL). The TB 5 domain occupies 956-1008 (ETCFLRYEDEECTLPVAGRHRMDACCCSVGAAWGTEECEECPVRNTPEYEELC). Residues 1028 to 1069 (DINECKMIPNLCTHGKCRNTIGSFKCRCDSGFALDSEERNCT) enclose the EGF-like 15; calcium-binding domain. Intrachain disulfides connect C1032–C1044, C1039–C1053, C1055–C1068, C1074–C1086, C1081–C1095, C1097–C1111, C1117–C1129, C1124–C1138, C1140–C1153, C1159–C1171, C1166–C1180, C1182–C1195, C1201–C1212, C1208–C1221, C1223–C1236, C1242–C1254, C1249–C1263, C1265–C1278, C1284–C1296, C1291–C1305, C1307–C1320, C1326–C1339, C1333–C1348, C1350–C1361, C1367–C1380, C1374–C1389, C1391–C1402, C1408–C1420, C1415–C1429, C1431–C1444, C1450–C1461, C1456–C1470, C1472–C1485, C1491–C1502, C1497–C1511, C1513–C1526, C1534–C1562, C1549–C1574, C1563–C1577, C1564–C1589, C1610–C1622, C1617–C1631, C1633–C1646, C1652–C1663, C1658–C1672, and C1674–C1687. The N-linked (GlcNAc...) asparagine glycan is linked to N1067. In terms of domain architecture, EGF-like 16; calcium-binding spans 1070–1112 (DIDECRISPDLCGRGQCVNTPGDFECKCDEGYESGFMMMKNCM). In terms of domain architecture, EGF-like 17; calcium-binding spans 1113–1154 (DIDECQRDPLLCRGGVCLNTEGSYRCECPPGHQLAPNISACI). A glycan (O-linked (Glc) serine) is linked at S1135. N-linked (GlcNAc...) asparagine glycosylation is present at N1149. The EGF-like 18; calcium-binding domain occupies 1155 to 1196 (DINECELSAHLCPHGRCVNLIGKYQCACNPGYHSTPDRLFCV). The EGF-like 19; calcium-binding domain occupies 1197–1237 (DIDECSIMNGGCETFCTNSEGSYECSCQPGFALMPDQRSCT). S1218 is a glycosylation site (O-linked (Glc) serine). An EGF-like 20; calcium-binding domain is found at 1238-1279 (DIDECEDNPNICDGGQCTNIPGEYRCLCYDGFMASEDMKTCV). In terms of domain architecture, EGF-like 21; calcium-binding spans 1280-1321 (DVNECDLNPNICLSGTCENTKGSFICHCDMGYSGKKGKTGCT). S1302 is a glycosylation site (O-linked (Glc) serine). The 41-residue stretch at 1322–1362 (DINECEIGAHNCDRHAVCTNTAGSFKCSCSPGWIGDGIKCT) folds into the EGF-like 22; calcium-binding domain. O-linked (Glc) serine glycosylation is present at S1345. The 41-residue stretch at 1363–1403 (DLDECSNGTHMCSQHADCKNTMGSYRCLCKEGYTGDGFTCT) folds into the EGF-like 23; calcium-binding domain. N1369 carries N-linked (GlcNAc...) asparagine glycosylation. O-linked (Glc) serine glycosylation is present at S1386. Residues 1404–1445 (DLDECSENLNLCGNGQCLNAPGGYRCECDMGFVPSADGKACE) enclose the EGF-like 24; calcium-binding domain. The region spanning 1446–1486 (DIDECSLPNICVFGTCHNLPGLFRCECEIGYELDRSGGNCT) is the EGF-like 25; calcium-binding domain. A glycan (N-linked (GlcNAc...) asparagine) is linked at N1484. An EGF-like 26; calcium-binding domain is found at 1487 to 1527 (DVNECLDPTTCISGNCVNTPGSYTCDCPPDFELNPTRVGCV). The O-linked (Glc) serine glycan is linked to S1508. Residues 1528 to 2731 (DTRSGNCYLD…GYPKRGRKRR (1204 aa)) are C-terminal domain. The TB 6 domain occupies 1532–1589 (GNCYLDIRPRGDNGDTACSNEIGVGVSKASCCCSLGKAWGTPCELCPPVNTSEYKILC). The short motif at 1541–1543 (RGD) is the Cell attachment site element. An N-linked (GlcNAc...) asparagine glycan is attached at N1581. Positions 1606-1647 (DIDECQELPGLCQGGKCINTFGSFQCRCPTGYYLNEDTRVCD) constitute an EGF-like 27; calcium-binding domain. S1628 is a glycosylation site (O-linked (Glc) serine). One can recognise an EGF-like 28; calcium-binding domain in the interval 1648-1688 (DVNECETPGICGPGTCYNTVGNYTCICPPDYMQVNGGNNCM). N1669 carries an N-linked (GlcNAc...) asparagine glycan. The TB 7 domain occupies 1693-1748 (SLCYRNYYADNQTCDGELLFNMTKKMCCCSYNIGRAWNKPCEQCPIPSTDEFATLC). N-linked (GlcNAc...) asparagine glycans are attached at residues N1703 and N1713. Positions 1766-1807 (DIDECREIPGVCENGVCINMVGSFRCECPVGFFYNDKLLVCE) constitute an EGF-like 29; calcium-binding domain. Disulfide bonds link C1770–C1782, C1777–C1791, C1793–C1806, C1812–C1824, C1818–C1833, C1835–C1847, C1853–C1865, C1860–C1874, C1876–C1889, C1895–C1905, C1900–C1914, C1916–C1928, C1934–C1947, C1942–C1956, C1958–C1971, C1977–C1989, C1984–C1998, C2000–C2011, C2017–C2029, C2024–C2038, C2040–C2053, C2061–C2083, C2070–C2096, C2084–C2099, C2085–C2111, C2131–C2142, C2137–C2151, C2153–C2164, C2170–C2181, C2176–C2190, C2192–C2204, C2210–C2221, C2217–C2230, C2232–C2245, C2251–C2265, C2258–C2274, C2276–C2289, C2295–C2307, C2302–C2316, and C2318–C2331. In terms of domain architecture, EGF-like 30; calcium-binding spans 1808–1848 (DIDECQNGPVCQRNAECINTAGSYRCDCKPGYRFTSTGQCN). O-linked (Glc) serine glycosylation is present at S1830. The 42-residue stretch at 1849–1890 (DRNECQEIPNICSHGQCIDTVGSFYCLCHTGFKTNADQTMCL) folds into the EGF-like 31; calcium-binding domain. S1871 is a glycosylation site (O-linked (Glc) serine). Positions 1891 to 1929 (DINECERDACGNGTCRNTIGSFNCRCNHGFILSHNNDCI) constitute an EGF-like 32; calcium-binding domain. The N-linked (GlcNAc...) asparagine glycan is linked to N1902. The O-linked (Glc) serine glycan is linked to S1911. The EGF-like 33; calcium-binding domain maps to 1930 to 1972 (DVDECATGNGNLCRNGQCINTVGSFQCQCNEGYEVAPDGRTCV). O-linked (Glc) serine glycosylation is present at S1953. Residues 1973–2012 (DINECLLDPRKCAPGTCQNLDGSYRCICPPGYSLQNDKCE) form the EGF-like 34; calcium-binding domain. An EGF-like 35; calcium-binding domain is found at 2013 to 2054 (DIDECVEEPEICALGTCSNTEGSFKCLCPDGFSLSSTGRRCQ). S2035 carries an O-linked (Glc) serine glycan. The TB 8 domain occupies 2059–2111 (SYCYAKFEGGKCSSPKSRNHSKQECCCALKGEGWGDPCELCPTEPDEAFRQIC). N2077 is a glycosylation site (N-linked (GlcNAc...) asparagine). Residues 2127–2165 (DMDECKEPDVCKHGQCINTDGSYRCECPFGYILQGNECV) enclose the EGF-like 36; calcium-binding domain. A glycan (O-linked (Glc) serine) is linked at S2148. Positions 2166 to 2205 (DTDECSVGNPCGNGTCKNVIGGFECTCEEGFEPGPMMTCE) constitute an EGF-like 37; calcium-binding domain. An N-linked (GlcNAc...) asparagine glycan is attached at N2178. Positions 2206 to 2246 (DINECAQNPLLCAFRCVNTYGSYECKCPAGYVLREDRRMCK) constitute an EGF-like 38; calcium-binding domain. S2227 carries an O-linked (Glc) serine glycan. One can recognise an EGF-like 39; calcium-binding domain in the interval 2247-2290 (DEDECEEGKHDCAEKQMECKNLIGTYLCICGPGYQRRPDGEGCV). An EGF-like 40; calcium-binding domain is found at 2291 to 2332 (DENECQTKPGICENGRCLNTRGSYTCECNDGFTASPNQDECL). A glycan (O-linked (Glc) serine) is linked at S2313. Residues 2337–2390 (GYCFTEVLQNMCQIGSSNRNPVTKSECCCDGGRGWGPHCEICPFQGTVAFKKLC) enclose the TB 9 domain. The region spanning 2402-2443 (DIDECKVIHDVCRNGECVNDRGSYHCICKTGYTPDITGTACV) is the EGF-like 41; calcium-binding domain. 21 disulfides stabilise this stretch: C2406–C2418, C2413–C2427, C2429–C2442, C2448–C2459, C2455–C2468, C2470–C2483, C2489–C2500, C2496–C2509, C2511–C2522, C2528–C2541, C2535–C2550, C2552–C2565, C2571–C2581, C2577–C2590, C2592–C2605, C2611–C2622, C2617–C2631, C2633–C2646, C2652–C2663, C2659–C2672, and C2674–C2686. The 41-residue stretch at 2444 to 2484 (DLNECNQAPKPCNFICKNTEGSYQCSCPKGYILQEDGRSCK) folds into the EGF-like 42; calcium-binding domain. An O-linked (Glc) serine glycan is attached at S2465. In terms of domain architecture, EGF-like 43; calcium-binding spans 2485–2523 (DLDECATKQHNCQFLCVNTIGSFTCKCPPGFTQHHTACI). The 43-residue stretch at 2524–2566 (DNNECTSDINLCGSKGICQNTPGSFTCECQRGFSLDPSGASCE) folds into the EGF-like 44; calcium-binding domain. S2547 carries an O-linked (Glc) serine glycan. Residues 2567 to 2606 (DVDECEGNHRCQHGCQNIIGGYRCSCPQGYLQHYQWNQCV) form the EGF-like 45; calcium-binding domain. The EGF-like 46; calcium-binding domain maps to 2607–2647 (DENECLSAHICGGASCHNTLGSYKCMCPAGFQYEQFSGGCQ). An O-linked (Glc) serine glycan is attached at S2628. Residues 2648 to 2687 (DINECGSAQAPCSYGCSNTEGGYLCACPPGYFRIGQGHCV) enclose the EGF-like 47; calcium-binding domain. Phosphoserine is present on residues S2702 and S2709. N-linked (GlcNAc...) asparagine glycosylation is found at N2734, N2750, and N2767.

Belongs to the fibrillin family. Interacts with COL16A1. Interacts with integrin alpha-V/beta-3. Interacts with ADAMTS10; this interaction promotes microfibril assembly. Interacts with THSD4; this interaction promotes fibril formation. Interacts (via N-terminal domain) with FBLN2 and FBLN5. Interacts with ELN. Forms a ternary complex with ELN and FBLN2 or FBLN5 and a significant interaction with ELN seen only in the presence of FBLN2 or FBLN5. Interacts (via N-terminal domain) with LTBP2 (via C-terminal domain) in a Ca(+2)-dependent manner. Interacts (via N-terminal domain) with LTBP1 (via C-terminal domain). Interacts with integrins ITGA5:ITGB1, ITGAV:ITGB3 and ITGAV:ITGB6. Interacts (via N-terminal domain) with BMP2, BMP4, BMP7, BMP10 and GDF5. Interacts (via N-terminal domain) with MFAP2 and MFAP5. Interacts with ADAMTSL5. Interacts with MFAP4. Interacts (via N-terminal domain) with TNFSF11 in a Ca(+2)-dependent manner. Interacts (via N-terminal domain) with EFEMP2; this interaction inhibits EFEMP2 binding to LOX and ELN. Cleavage of N- and C-terminus by furin is required for incorporation into the extracellular matrix and assembly into microfibrils. The C-terminus, which corresponds to the Asprosin chain, was initially thought to constitute a propeptide. Fibrillin-1 and Asprosin chains are still linked together during the secretion from cells, but are subsequently separated by furin, an essential step for incorporation of Fibrillin-1 into the nascent microfibrils. Post-translationally, forms intermolecular disulfide bonds either with other fibrillin-1 molecules or with other components of the microfibrils. In terms of processing, O-glycosylated on serine residues by POGLUT2 and POGLUT3 which is necessary for efficient protein secretion.

It is found in the secreted. The protein localises to the extracellular space. It localises to the extracellular matrix. Functionally, structural component of the 10-12 nm diameter microfibrils of the extracellular matrix, which conveys both structural and regulatory properties to load-bearing connective tissues. Fibrillin-1-containing microfibrils provide long-term force bearing structural support. In tissues such as the lung, blood vessels and skin, microfibrils form the periphery of the elastic fiber, acting as a scaffold for the deposition of elastin. In addition, microfibrils can occur as elastin-independent networks in tissues such as the ciliary zonule, tendon, cornea and glomerulus where they provide tensile strength and have anchoring roles. Fibrillin-1 also plays a key role in tissue homeostasis through specific interactions with growth factors, such as the bone morphogenetic proteins (BMPs), growth and differentiation factors (GDFs) and latent transforming growth factor-beta-binding proteins (LTBPs), cell-surface integrins and other extracellular matrix protein and proteoglycan components. Regulates osteoblast maturation by controlling TGF-beta bioavailability and calibrating TGF-beta and BMP levels, respectively. Negatively regulates osteoclastogenesis by binding and sequestering an osteoclast differentiation and activation factor TNFSF11. This leads to disruption of TNFSF11-induced Ca(2+) signaling and impairment of TNFSF11-mediated nuclear translocation and activation of transcription factor NFATC1 which regulates genes important for osteoclast differentiation and function. Mediates cell adhesion via its binding to cell surface receptors integrins ITGAV:ITGB3 and ITGA5:ITGB1. Binds heparin and this interaction plays an important role in the assembly of microfibrils. Hormone that targets the liver to increase plasma glucose levels. Secreted by white adipose tissue and circulates in the plasma. Acts in response to fasting and promotes blood glucose elevation by binding to the surface of hepatocytes. Promotes hepatocyte glucose release by activating the protein kinase A activity in the liver, resulting in rapid glucose release into the circulation. The sequence is that of Fibrillin-1 from Bos taurus (Bovine).